A 345-amino-acid polypeptide reads, in one-letter code: S-adenosylmethionine:tRNA ribosyltransferase-isomerase (345 aa).

The protein belongs to the QueA family. In terms of assembly, monomer.

It localises to the cytoplasm. The catalysed reaction is 7-aminomethyl-7-carbaguanosine(34) in tRNA + S-adenosyl-L-methionine = epoxyqueuosine(34) in tRNA + adenine + L-methionine + 2 H(+). The protein operates within tRNA modification; tRNA-queuosine biosynthesis. Its function is as follows. Transfers and isomerizes the ribose moiety from AdoMet to the 7-aminomethyl group of 7-deazaguanine (preQ1-tRNA) to give epoxyqueuosine (oQ-tRNA). The protein is S-adenosylmethionine:tRNA ribosyltransferase-isomerase of Shewanella sp. (strain ANA-3).